The following is a 251-amino-acid chain: B3 domain-containing protein REM7 (251 aa).

2 DNA-binding regions (TF-B3) span residues 11–103 (NSHF…LGPS) and 170–251 (CFVA…SRLN).

The protein localises to the nucleus. The sequence is that of B3 domain-containing protein REM7 (REM7) from Arabidopsis thaliana (Mouse-ear cress).